A 202-amino-acid polypeptide reads, in one-letter code: Apolipoprotein R (202 aa).

An N-terminal signal peptide occupies residues 1 to 28 (MPPNLQRIFPALCLLGVLFLLHCTPVLC). Sushi domains lie at 29–87 (GCDN…QCKA) and 88–145 (LCPK…KCEW). Cystine bridges form between Cys30-Cys73, Cys59-Cys85, Cys89-Cys130, and Cys116-Cys143.

As to quaternary structure, forms high molecular weight disulfide-linked complexes. Plasma. Found on very low-density lipoprotein (VLDL), on chylomicrons, and in the D &gt; 1.21 g/ml fraction of pig plasma. Found in liver, spleen, lung, bone marrow and lymph node.

It localises to the secreted. Its function is as follows. May be a lipoprotein-borne regulator of either the coagulation or the complement cascades. The polypeptide is Apolipoprotein R (APOR) (Sus scrofa (Pig)).